The sequence spans 67 residues: Alpha-toxin Cn12 (67 aa).

The region spanning 1–66 (RDGYPLASNG…WGDSGTGPCR (66 aa)) is the LCN-type CS-alpha/beta domain. Intrachain disulfides connect cysteine 11–cysteine 65, cysteine 15–cysteine 40, cysteine 25–cysteine 45, and cysteine 29–cysteine 47.

Expressed by the venom gland.

It is found in the secreted. Its function is as follows. Alpha toxins bind voltage-independently at site-3 of sodium channels (Nav) and inhibit the inactivation of the activated channels, thereby blocking neuronal transmission. This toxin binds, in vitro, to sodium channels and inhibits the inactivation of the activated channels. Seems not toxic to mice, crickets and sweet-water shrimps. This Centruroides noxius (Mexican scorpion) protein is Alpha-toxin Cn12.